Reading from the N-terminus, the 249-residue chain is Protein-lysine 6-oxidase (249 aa).

Sulfotyrosine is present on Tyr19. The lysyl-oxidase like stretch occupies residues 45-249 (PDLVPDPYYI…YASGCTISPY (205 aa)). 5 disulfides stabilise this stretch: Cys70–Cys76, Cys123–Cys172, Cys156–Cys162, Cys183–Cys193, and Cys230–Cys244. The Cu cation site is built by His124, His126, and His128. The lysine tyrosylquinone (Lys-Tyr) cross-link spans 152–187 (KASFCLEDTSCDYGYHRRFACTAHTQGLSPGCYDTY). Residue Tyr187 is modified to 2',4',5'-topaquinone.

This sequence belongs to the lysyl oxidase family. In terms of assembly, interacts with MFAP4. Interacts (via propeptide) with EFEMP2; this interaction is strong and facilitates formation of ternary complexes with ELN during elastic fiber assembly; this interaction limits interaction of EFEMP2 with FBLN5. Cu cation serves as cofactor. The cofactor is lysine tyrosylquinone residue. Post-translationally, the lysine tyrosylquinone cross-link (LTQ) is generated by condensation of the epsilon-amino group of a lysine with a topaquinone produced by oxidation of tyrosine. In terms of processing, proteolytically cleaved by BMP1 which removes the propeptide. Also proteolytically cleaved by ADAMTS2 and ADAMTS14, but not by ADAMTS3, at an additional cleavage site downstream of the BMP1 cleavage site. The propeptide plays a role in directing the deposition of this enzyme to elastic fibers, via interaction with tropoelastin. Cleavage by BMP1 to remove the propeptide does not increase enzymatic activity but increases binding to collagen. Cleavage by ADAMTS2 produces a form with reduced collagen-binding activity. Sulfated at Tyr-19 and also at either Tyr-15 or Tyr-16 which enhances binding to collagen.

Its subcellular location is the secreted. The protein resides in the extracellular space. The catalysed reaction is L-lysyl-[protein] + O2 + H2O = (S)-2-amino-6-oxohexanoyl-[protein] + H2O2 + NH4(+). Responsible for the post-translational oxidative deamination of peptidyl lysine residues in precursors to fibrous collagen and elastin. Regulator of Ras expression. May play a role in tumor suppression. Plays a role in the aortic wall architecture. The sequence is that of Protein-lysine 6-oxidase from Sus scrofa (Pig).